Consider the following 465-residue polypeptide: Lactaldehyde dehydrogenase (465 aa).

An NAD(+)-binding site is contributed by G220–G225. Residues E240 and C274 contribute to the active site.

This sequence belongs to the aldehyde dehydrogenase family. In terms of assembly, homotetramer.

It catalyses the reaction (S)-lactaldehyde + NAD(+) + H2O = (S)-lactate + NADH + 2 H(+). It participates in cofactor biosynthesis; coenzyme F420 biosynthesis. Involved in F420 biosynthesis through the oxidation of lactaldehyde to lactate. The chain is Lactaldehyde dehydrogenase from Methanococcus maripaludis (strain C7 / ATCC BAA-1331).